Here is a 190-residue protein sequence, read N- to C-terminus: Embryo-specific protein ATS3B (190 aa).

A signal peptide spans 1–24 (MASVRLFFTLISFVFIISTSVYES). Residue Asn-37 is glycosylated (N-linked (GlcNAc...) asparagine). The PLAT domain occupies 48-158 (CAYTVIISTS…ESVWYGFNYC (111 aa)).

As to quaternary structure, interacts with EULS3 (via N-terminus). As to expression, expressed in roots, rosette leaves, stems, cauline leaves and flowers.

It is found in the secreted. Functionally, may play a role during embryo development. This chain is Embryo-specific protein ATS3B, found in Arabidopsis thaliana (Mouse-ear cress).